The chain runs to 442 residues: Lipoyl synthase, apicoplast (442 aa).

The first 23 residues, 1–23, serve as a signal peptide directing secretion; sequence MRVLTPSLYIYAFFIFCVRFKCG. The segment at 104–154 is disordered; the sequence is LGEHQLKGKRKESATNVEKEKKEKEQQEERLPVPKVGNKMPEKKPDWFHVP. Residues 114–135 show a composition bias toward basic and acidic residues; the sequence is KESATNVEKEKKEKEQQEERLP. 7 residues coordinate [4Fe-4S] cluster: Cys177, Cys182, Cys188, Cys203, Cys207, Cys210, and Ser418. The Radical SAM core domain occupies 189-407; it reads WNIGTATIML…KEEGMKMGFK (219 aa).

Belongs to the radical SAM superfamily. Lipoyl synthase family. [4Fe-4S] cluster serves as cofactor.

It localises to the plastid. Its subcellular location is the apicoplast. It catalyses the reaction [[Fe-S] cluster scaffold protein carrying a second [4Fe-4S](2+) cluster] + N(6)-octanoyl-L-lysyl-[protein] + 2 oxidized [2Fe-2S]-[ferredoxin] + 2 S-adenosyl-L-methionine + 4 H(+) = [[Fe-S] cluster scaffold protein] + N(6)-[(R)-dihydrolipoyl]-L-lysyl-[protein] + 4 Fe(3+) + 2 hydrogen sulfide + 2 5'-deoxyadenosine + 2 L-methionine + 2 reduced [2Fe-2S]-[ferredoxin]. Its pathway is protein modification; protein lipoylation via endogenous pathway; protein N(6)-(lipoyl)lysine from octanoyl-[acyl-carrier-protein]: step 2/2. In terms of biological role, catalyzes the radical-mediated insertion of two sulfur atoms into the C-6 and C-8 positions of the octanoyl moiety bound to the lipoyl domains of lipoate-dependent enzymes, thereby converting the octanoylated domains into lipoylated derivatives. The sequence is that of Lipoyl synthase, apicoplast from Plasmodium knowlesi (strain H).